A 310-amino-acid polypeptide reads, in one-letter code: D-erythrulose 1-phosphate 3-epimerase (310 aa).

It carries out the reaction D-erythrulose 1-phosphate = L-erythrulose 1-phosphate. It functions in the pathway carbohydrate metabolism; erythritol degradation. Catalyzes the racemization of D-erythrulose 1-phosphate to L-erythrulose 1-phosphate. This chain is D-erythrulose 1-phosphate 3-epimerase, found in Brucella abortus (strain 2308).